The sequence spans 423 residues: Pre-mRNA-splicing regulator WTAP (423 aa).

Residues 234 to 423 (QQLSQMNQTQ…TSNASAGSVL (190 aa)) form a disordered region. Composition is skewed to polar residues over residues 239–276 (MNQT…SSNV), 285–301 (NGPS…SGSS), 358–377 (DSPT…TDSN), and 392–404 (TAGT…NGLD). Residues 405–423 (SSAAAVATNTSNASAGSVL) are compositionally biased toward low complexity.

It belongs to the fl(2)d family. In terms of assembly, component of the WMM complex, a N6-methyltransferase complex composed of a catalytic subcomplex, named MAC, and of an associated subcomplex, named MACOM. Component of the MACOM subcomplex.

Its subcellular location is the nucleus speckle. It is found in the nucleus. The protein resides in the nucleoplasm. Its function is as follows. Associated component of the WMM complex, a complex that mediates N6-methyladenosine (m6A) methylation of RNAs, a modification that plays a role in the efficiency of mRNA splicing and RNA processing. In Danio rerio (Zebrafish), this protein is Pre-mRNA-splicing regulator WTAP.